Consider the following 262-residue polypeptide: Nurim (262 aa).

Residues 1–4 (MAPA) lie on the Nuclear side of the membrane. Residues 5–28 (LLLIPAALASFILAFGTGVEFVRF) traverse the membrane as a helical segment. At 29 to 58 (TSLRPLLGGIPESGGPDARQGWLAALQDRS) the chain is on the perinuclear space side. A helical membrane pass occupies residues 59–80 (ILAPLAWDLGLLLLFVGQHSLM). Topologically, residues 81-97 (AAERVKAWTSRYFGVLQ) are nuclear. A helical transmembrane segment spans residues 98–114 (RSLYVACTALALQLVMR). Residues 115–133 (YWEPIPKGPVLWEARAEPW) are Perinuclear space-facing. Residues 134-164 (ATWVPLLCFVLHVISWLLIFSILLVFDYAEL) form a helical membrane-spanning segment. Over 165–191 (MGLKQVYYHVLGLGEPLALKSPRALRL) the chain is Nuclear. Residues 192 to 210 (FSHLRHPVCVELLTVLWVV) traverse the membrane as a helical segment. Over 211–216 (PTLGTD) the chain is Perinuclear space. Residues 217–234 (RLLLAFLLTLYLGLAHGL) form a helical membrane-spanning segment. Residues 235–262 (DQQDLRYLRAQLQRKLHLLSRPQDGEAE) lie on the Nuclear side of the membrane.

The protein belongs to the nurim family.

Its subcellular location is the nucleus inner membrane. The chain is Nurim (NRM) from Homo sapiens (Human).